The chain runs to 431 residues: uncharacterized protein (431 aa).

Disordered stretches follow at residues 1 to 37 (MFWR…KLTP) and 102 to 132 (PPPL…RRVA). Residues 22–32 (GDFRRSSDPRL) are compositionally biased toward basic and acidic residues. The span at 106 to 121 (LSAGASRESAPRQPGP) shows a compositional bias: low complexity. Positions 122 to 132 (GERERPRRRVA) are enriched in basic and acidic residues.

Its subcellular location is the cytoplasm. This is an uncharacterized protein from Homo sapiens (Human).